Reading from the N-terminus, the 209-residue chain is Probable transcriptional regulator ycf29 (209 aa).

Positions 4–120 (NLMLVENDTV…ELVSLIKNLI (117 aa)) constitute a Response regulatory domain. 4-aspartylphosphate is present on aspartate 53. An HTH luxR-type domain is found at 139 to 204 (PLFQLLYLTP…LLVKYSIKNN (66 aa)).

The protein localises to the plastid. It localises to the chloroplast. This is Probable transcriptional regulator ycf29 (ycf29) from Porphyra purpurea (Red seaweed).